The chain runs to 339 residues: Cyclin-Y-like protein 1-A (339 aa).

The segment covering 1–13 (MGNTVTCCVSPDS) has biased composition (polar residues). The segment at 1–42 (MGNTVTCCVSPDSSPKEGRDREVTESGEPYQAQGEPQDGDVQ) is disordered. The span at 14–24 (SPKEGRDREVT) shows a compositional bias: basic and acidic residues. Residues 141–263 (DIFDEKLHPI…FLELLQFNIN (123 aa)) enclose the Cyclin N-terminal domain.

This sequence belongs to the cyclin family. Cyclin Y subfamily.

The sequence is that of Cyclin-Y-like protein 1-A (ccnyl1-a) from Xenopus laevis (African clawed frog).